The sequence spans 73 residues: Toxin Td3 (73 aa).

The signal sequence occupies residues 1 to 7; that stretch reads IGMVVEC. The 63-residue stretch at 8 to 70 folds into the LCN-type CS-alpha/beta domain; it reads KDGYLMGPDG…VWERATNRCG (63 aa). Cystine bridges form between Cys-18–Cys-69, Cys-22–Cys-44, Cys-30–Cys-50, and Cys-34–Cys-52. Lysine amide is present on Lys-71.

This sequence belongs to the long (4 C-C) scorpion toxin superfamily. Sodium channel inhibitor family. Beta subfamily. As to expression, expressed by the venom gland.

The protein localises to the secreted. In terms of biological role, beta toxins bind voltage-independently at site-4 of sodium channels (Nav) and shift the voltage of activation toward more negative potentials thereby affecting sodium channel activation and promoting spontaneous and repetitive firing. The protein is Toxin Td3 of Tityus discrepans (Venezuelan scorpion).